The chain runs to 700 residues: ATP-dependent DNA helicase UvrD2 (700 aa).

Residues 10–301 (AGLDDQQREA…VRLERDYRST (292 aa)) form the UvrD-like helicase ATP-binding domain. ATP contacts are provided by residues 34–39 (GTGKTR) and Arg-299. The UvrD-like helicase C-terminal domain occupies 302–553 (PQVVSLANRV…LYVGITRARV (252 aa)). Residues 565-595 (PGGRQSRKPSRFLNGIAPQTRADPVPGTSRR) form a disordered region. The HRDC domain occupies 626–700 (ADVDEELLLQ…DVLQLVRGRT (75 aa)).

This sequence belongs to the helicase family. UvrD subfamily. Mg(2+) serves as cofactor.

It catalyses the reaction Couples ATP hydrolysis with the unwinding of duplex DNA by translocating in the 3'-5' direction.. It carries out the reaction ATP + H2O = ADP + phosphate + H(+). Its function is as follows. DNA-dependent ATPase, stimulated equally by ss- and dsDNA. Has both ATPase and helicase activities. The protein is ATP-dependent DNA helicase UvrD2 (uvrD2) of Mycobacterium bovis (strain ATCC BAA-935 / AF2122/97).